We begin with the raw amino-acid sequence, 244 residues long: MATPTQEQLKTLEQSRQRLVQLTRSLASLITSLNQSDPLPSWSSLQSQASIISNNLLSVSDHLSDNRDLLTSLVAYPGPDYPGRTQANTLEQLLRTKLDPRVEDWVARGRKAGASALEDKSGLAEAELAELWDWAPVEANQEARRRNWGGNFTLEEREMGVQNVVTGLARVLEDEGSESEDEEEGEEDEMEIVGVRRQSAGAGFEFDIAPASAAQHQQQKFVEPAVPLEDILRFMTTGAEPGKR.

The stretch at glutamine 6–isoleucine 30 forms a coiled coil.

This sequence belongs to the Mediator complex subunit 8 family. Component of the Mediator complex.

It localises to the nucleus. Its function is as follows. Component of the Mediator complex, a coactivator involved in the regulated transcription of nearly all RNA polymerase II-dependent genes. Mediator functions as a bridge to convey information from gene-specific regulatory proteins to the basal RNA polymerase II transcription machinery. Mediator is recruited to promoters by direct interactions with regulatory proteins and serves as a scaffold for the assembly of a functional preinitiation complex with RNA polymerase II and the general transcription factors. In Aspergillus oryzae (strain ATCC 42149 / RIB 40) (Yellow koji mold), this protein is Mediator of RNA polymerase II transcription subunit 8 (med8).